A 420-amino-acid chain; its full sequence is Putative phosphate permease HI_1604 (420 aa).

A run of 12 helical transmembrane segments spans residues 8–28 (GSWL…GIGA), 49–69 (AIII…GEVT), 88–108 (ILAL…FIAT), 112–132 (WPVS…CITI), 145–165 (IVGS…AIFA), 185–205 (GPYY…KKGL), 216–236 (ETLI…HFYF), 250–270 (FGAV…AMAF), 300–320 (GGAL…VGLI), 343–363 (FAAQ…GLPI), 370–390 (VGAI…LTVI), and 393–413 (IISS…IIFY).

Belongs to the inorganic phosphate transporter (PiT) (TC 2.A.20) family.

The protein resides in the cell inner membrane. Potential transporter for phosphate. The sequence is that of Putative phosphate permease HI_1604 from Haemophilus influenzae (strain ATCC 51907 / DSM 11121 / KW20 / Rd).